We begin with the raw amino-acid sequence, 182 residues long: Crossover junction endodeoxyribonuclease RuvC (182 aa).

Active-site residues include Asp7, Glu69, and Asp141. Asp7, Glu69, and Asp141 together coordinate Mg(2+).

This sequence belongs to the RuvC family. Homodimer which binds Holliday junction (HJ) DNA. The HJ becomes 2-fold symmetrical on binding to RuvC with unstacked arms; it has a different conformation from HJ DNA in complex with RuvA. In the full resolvosome a probable DNA-RuvA(4)-RuvB(12)-RuvC(2) complex forms which resolves the HJ. The cofactor is Mg(2+).

It localises to the cytoplasm. The catalysed reaction is Endonucleolytic cleavage at a junction such as a reciprocal single-stranded crossover between two homologous DNA duplexes (Holliday junction).. Its function is as follows. The RuvA-RuvB-RuvC complex processes Holliday junction (HJ) DNA during genetic recombination and DNA repair. Endonuclease that resolves HJ intermediates. Cleaves cruciform DNA by making single-stranded nicks across the HJ at symmetrical positions within the homologous arms, yielding a 5'-phosphate and a 3'-hydroxyl group; requires a central core of homology in the junction. The consensus cleavage sequence is 5'-(A/T)TT(C/G)-3'. Cleavage occurs on the 3'-side of the TT dinucleotide at the point of strand exchange. HJ branch migration catalyzed by RuvA-RuvB allows RuvC to scan DNA until it finds its consensus sequence, where it cleaves and resolves the cruciform DNA. The protein is Crossover junction endodeoxyribonuclease RuvC of Paracidovorax citrulli (strain AAC00-1) (Acidovorax citrulli).